Here is a 522-residue protein sequence, read N- to C-terminus: Zinc finger protein STOP1 homolog (522 aa).

Composition is skewed to polar residues over residues 1 to 12 (MDSGLGRSSETS) and 19 to 40 (MASN…SSMD). Disordered stretches follow at residues 1 to 43 (MDSG…DQPP) and 234 to 260 (CGGE…EREN). Positions 244–260 (MEDHDVKESDDGGEREN) are enriched in basic and acidic residues. Residues 282–304 (HFCLICGKGFKRDANLRMHMRGH) form a C2H2-type 1 zinc finger. The segment at 390-421 (KHCGRDKWLCSCGTTFSRKDKLFGHVALFQGH) adopts a C2H2-type 2; atypical zinc-finger fold.

It localises to the nucleus. Probable transcription factor that may be involved in aluminum tolerance. In Oryza sativa subsp. japonica (Rice), this protein is Zinc finger protein STOP1 homolog.